Here is a 130-residue protein sequence, read N- to C-terminus: Trypsin inhibitor (130 aa).

The segment at 27–49 (LHKQARQSGSGPSPQGPQQRPPL) is disordered. Positions 32–49 (RQSGSGPSPQGPQQRPPL) are enriched in low complexity.

It belongs to the 2S seed storage albumins family. The protein consists of two chains linked by disulfide bonds.

Inhibits trypsin with a Ki of 7 x 10(-6) M. The polypeptide is Trypsin inhibitor (Mutarda arvensis (Charlock mustard)).